Reading from the N-terminus, the 101-residue chain is Small ribosomal subunit protein uS14 (101 aa).

It belongs to the universal ribosomal protein uS14 family. Part of the 30S ribosomal subunit. Contacts proteins S3 and S10.

Its function is as follows. Binds 16S rRNA, required for the assembly of 30S particles and may also be responsible for determining the conformation of the 16S rRNA at the A site. The sequence is that of Small ribosomal subunit protein uS14 from Pelagibacter ubique (strain HTCC1062).